The primary structure comprises 222 residues: UPF0585 protein CG18661 (222 aa).

It belongs to the UPF0585 family.

This chain is UPF0585 protein CG18661, found in Drosophila melanogaster (Fruit fly).